The following is a 572-amino-acid chain: Urease subunit alpha (572 aa).

In terms of domain architecture, Urease spans 134–572 (GGIDAHVHFI…LPMAQRYFLF (439 aa)). Ni(2+) contacts are provided by histidine 139, histidine 141, and lysine 222. Residue lysine 222 is modified to N6-carboxylysine. Histidine 224 contributes to the substrate binding site. Residues histidine 251 and histidine 277 each contribute to the Ni(2+) site. Residue histidine 325 is the Proton donor of the active site. Ni(2+) is bound at residue aspartate 365.

It belongs to the metallo-dependent hydrolases superfamily. Urease alpha subunit family. As to quaternary structure, heterotrimer of UreA (gamma), UreB (beta) and UreC (alpha) subunits. Three heterotrimers associate to form the active enzyme. It depends on Ni cation as a cofactor. In terms of processing, carboxylation allows a single lysine to coordinate two nickel ions.

The protein localises to the cytoplasm. The catalysed reaction is urea + 2 H2O + H(+) = hydrogencarbonate + 2 NH4(+). Its pathway is nitrogen metabolism; urea degradation; CO(2) and NH(3) from urea (urease route): step 1/1. The protein is Urease subunit alpha of Synechococcus sp. (strain JA-2-3B'a(2-13)) (Cyanobacteria bacterium Yellowstone B-Prime).